We begin with the raw amino-acid sequence, 309 residues long: MPSAGLCSCWGGRVLPLLLAYVCYLLLGATIFQLLERQAEAQSRDQFQLEKLRFLENYTCLDQWAMEQFVQVIMEAWVKGVNPKGNSTNPSNWDFGSSFFFAGTVVTTIGYGNLAPSTEAGQVFCVFYALLGIPLNVIFLNHLGTGLRAHLAAIERWEDRPRRSQVLQVLGLALFLTLGTLVILIFPPMVFSHVEGWSFSEGFYFAFITLSTIGFGDYVVGTDPSKHYISVYRSLAAIWILLGLAWLALILPLGPLLLHRCCQLWLLSLRQGCGAKAAPGRRPRRGSTAARGVQVTPQDFPISKKGLGS.

At 1–13 (MPSAGLCSCWGGR) the chain is on the cytoplasmic side. The chain crosses the membrane as a helical span at residues 14–34 (VLPLLLAYVCYLLLGATIFQL). An intramembrane region (pore-forming) is located at residues 98-116 (SFFFAGTVVTTIGYGNLAP). K(+) is bound by residues T108, I109, G110, and Y111. A selectivity filter 1 region spans residues 108-113 (TIGYGN). Residues 120–140 (AGQVFCVFYALLGIPLNVIFL) form a helical membrane-spanning segment. The Cytoplasmic segment spans residues 141–165 (NHLGTGLRAHLAAIERWEDRPRRSQ). The helical transmembrane segment at 166–186 (VLQVLGLALFLTLGTLVILIF) threads the bilayer. Residues 202 to 221 (GFYFAFITLSTIGFGDYVVG) constitute an intramembrane region (pore-forming). Residues T212, I213, G214, and F215 each contribute to the K(+) site. A selectivity filter 2 region spans residues 212 to 217 (TIGFGD). Residues 238–258 (IWILLGLAWLALILPLGPLLL) form a helical membrane-spanning segment. Residues 259-309 (HRCCQLWLLSLRQGCGAKAAPGRRPRRGSTAARGVQVTPQDFPISKKGLGS) are Cytoplasmic-facing.

It belongs to the two pore domain potassium channel (TC 1.A.1.8) family. As to quaternary structure, homodimer; disulfide-linked. Heterodimer with KCNK17 and KCNK5. As to expression, highly expressed in pancreas, in both endocrine (alpha, beta, gamma, delta, and epsilon) and exocrine (acinar and ductal) cells. Expressed in pacreatic beta-cells (at protein level). Expressed in pacreatic delta-cells (at protein level). Not detectable in the other tissues tested.

Its subcellular location is the endoplasmic reticulum membrane. The protein localises to the cell membrane. It localises to the mitochondrion inner membrane. It carries out the reaction K(+)(in) = K(+)(out). The enzyme catalyses Rb(+)(in) = Rb(+)(out). It catalyses the reaction Cs(+)(in) = Cs(+)(out). Its activity is regulated as follows. The channel conductance is stimulated by extracellular alkaline pH. Inhibited by Ba(2+) ions, quinine, quinidine, chloroform and halothane. In terms of biological role, k(+) channel that conducts voltage-dependent outward rectifying currents upon membrane depolarization. Voltage sensing is coupled to K(+) electrochemical gradient in an 'ion flux gating' mode where outward but not inward ion flow opens the gate. Homo- and heterodimerizes to form functional channels with distinct regulatory and gating properties. In pancreatic islets, conducts K(+) countercurrents for Ca(2+) release from the endoplasmic reticulum (ER) and regulates the frequency and duration of cytosolic Ca(2+) oscillations coupled to secretion of pancreatic hormones. In pancreatic beta cells, drives ER Ca(2+) efflux, which in turn activates Ca(2+)-dependent plasma membrane K(+) slow currents and cytosolic Ca(2+) influx, overall contributing to synchronous cytosolic Ca(2+) oscillations. Limits glucose-induced cytosolic Ca(2+) oscillations coupled to second-phase INS secretion. Contributes to beta cell adaptation to acute inflammation by maintaining normal cytosolic Ca(2+) levels and INS secretion. May regulate beta cell mitochondrial Ca(2+) levels either indirectly via ER Ca(2+) efflux or directly by hyperpolarizing the mitochondrial membrane potential. Limits mitochondrial Ca(2+) oscillations and ATP production involved in glucose homeostasis upon metabolic stress. In pancreatic delta cells, limits Ca(2+)-induced Ca(2+)-release involved in somatostatin secretion and modulates islet paracrine signaling involved in glucagon secretion. Permeable to other monovalent cations such as Rb(+) and Cs(+). The chain is Potassium channel subfamily K member 16 from Homo sapiens (Human).